Reading from the N-terminus, the 143-residue chain is Nucleoside diphosphate kinase (143 aa).

ATP contacts are provided by K11, F59, R87, T93, R104, and N114. H117 functions as the Pros-phosphohistidine intermediate in the catalytic mechanism.

This sequence belongs to the NDK family. As to quaternary structure, homotetramer. It depends on Mg(2+) as a cofactor.

Its subcellular location is the cytoplasm. It catalyses the reaction a 2'-deoxyribonucleoside 5'-diphosphate + ATP = a 2'-deoxyribonucleoside 5'-triphosphate + ADP. The enzyme catalyses a ribonucleoside 5'-diphosphate + ATP = a ribonucleoside 5'-triphosphate + ADP. Its function is as follows. Major role in the synthesis of nucleoside triphosphates other than ATP. The ATP gamma phosphate is transferred to the NDP beta phosphate via a ping-pong mechanism, using a phosphorylated active-site intermediate. In Alteromonas mediterranea (strain DSM 17117 / CIP 110805 / LMG 28347 / Deep ecotype), this protein is Nucleoside diphosphate kinase.